Consider the following 81-residue polypeptide: Serine protease inhibitor Kazal-type 2 (81 aa).

The N-terminal stretch at methionine 1–leucine 21 is a signal peptide. The Kazal-like domain maps to lysine 27–cysteine 81. 3 cysteine pairs are disulfide-bonded: cysteine 33–cysteine 63, cysteine 41–cysteine 60, and cysteine 49–cysteine 81.

In terms of tissue distribution, more abundant in epididymis than in testis.

The protein resides in the secreted. Its subcellular location is the cytoplasmic vesicle. It is found in the secretory vesicle. It localises to the acrosome. Its function is as follows. Strong inhibitor of acrosin in male and/or female genital tract. Also inhibits trypsin. Functionally, as a strong inhibitor of acrosin, it is required for normal spermiogenesis. It probably hinders premature activation of proacrosin and other proteases, thus preventing the cascade of events leading to spermiogenesis defects. May be involved in the regulation of serine protease-dependent germ cell apoptosis. It also inhibits trypsin. This chain is Serine protease inhibitor Kazal-type 2 (SPINK2), found in Macaca fascicularis (Crab-eating macaque).